We begin with the raw amino-acid sequence, 484 residues long: MKLEKIIKGITVNEIIGDASQEISGINMDSRLIEPGHIFVAVKGTQTDGHTYIQKAIEKGARTVVCENLPETLIENVTYIKVNDTEDVVGKLATTFYGDPTSKLELVGVTGTNGKTTIATLLYNMFRKFGYKTGLISTVCNYIDEEAIPTDHTTPDPITLNKLLGRMADEGCKYAFMEVSSHSVAQKRIGGLKFAGGIFTNLTRDHLDYHKTVENYLKAKKAFFDGLPKTAFALTNLDDKNGLVMTQNTKAKVHTYSLRSLSDFKGKVLEDGFEGMLLDINNVEVNVQFIGRFNASNLLAVYGAACLLGKKTEEVLLALSTLRPVAGRFDSLRSPKGYTAIVDYAHTPDALENVLNAIHEVLNGKGHVITVVGAGGNRDKGKRPLMAQEAVKQSDKVIITSDNPRFEEPQEIINDMLAGLTKEDMRKVISIADRKEAIRTACMLAQAKDVILVAGKGHENYQEIKGIKHHFDDKEVLRDIFANE.

Residue Ser-30 coordinates UDP-N-acetyl-alpha-D-muramoyl-L-alanyl-D-glutamate. 111–117 provides a ligand contact to ATP; that stretch reads GTNGKTT. Residues 153 to 154, Ser-180, Gln-186, and Arg-188 contribute to the UDP-N-acetyl-alpha-D-muramoyl-L-alanyl-D-glutamate site; that span reads TT. Lys-220 carries the post-translational modification N6-carboxylysine. Residues Arg-378, 402–405, Gly-455, and Glu-459 each bind meso-2,6-diaminopimelate; that span reads DNPR. Positions 402 to 405 match the Meso-diaminopimelate recognition motif motif; the sequence is DNPR.

The protein belongs to the MurCDEF family. MurE subfamily. It depends on Mg(2+) as a cofactor. Carboxylation is probably crucial for Mg(2+) binding and, consequently, for the gamma-phosphate positioning of ATP.

It localises to the cytoplasm. It catalyses the reaction UDP-N-acetyl-alpha-D-muramoyl-L-alanyl-D-glutamate + meso-2,6-diaminopimelate + ATP = UDP-N-acetyl-alpha-D-muramoyl-L-alanyl-gamma-D-glutamyl-meso-2,6-diaminopimelate + ADP + phosphate + H(+). It participates in cell wall biogenesis; peptidoglycan biosynthesis. Its function is as follows. Catalyzes the addition of meso-diaminopimelic acid to the nucleotide precursor UDP-N-acetylmuramoyl-L-alanyl-D-glutamate (UMAG) in the biosynthesis of bacterial cell-wall peptidoglycan. This is UDP-N-acetylmuramoyl-L-alanyl-D-glutamate--2,6-diaminopimelate ligase from Phocaeicola vulgatus (strain ATCC 8482 / DSM 1447 / JCM 5826 / CCUG 4940 / NBRC 14291 / NCTC 11154) (Bacteroides vulgatus).